We begin with the raw amino-acid sequence, 105 residues long: CRISPR-associated endoribonuclease Cas2 1 (105 aa).

D20 lines the Mg(2+) pocket.

It belongs to the CRISPR-associated endoribonuclease Cas2 protein family. In terms of assembly, homodimer, forms a heterotetramer with a Cas1 homodimer. Requires Mg(2+) as cofactor.

In terms of biological role, CRISPR (clustered regularly interspaced short palindromic repeat), is an adaptive immune system that provides protection against mobile genetic elements (viruses, transposable elements and conjugative plasmids). CRISPR clusters contain sequences complementary to antecedent mobile elements and target invading nucleic acids. CRISPR clusters are transcribed and processed into CRISPR RNA (crRNA). Functions as a ssRNA-specific endoribonuclease. Involved in the integration of spacer DNA into the CRISPR cassette. The chain is CRISPR-associated endoribonuclease Cas2 1 (cas21) from Nitrosomonas europaea (strain ATCC 19718 / CIP 103999 / KCTC 2705 / NBRC 14298).